The following is a 72-amino-acid chain: Large ribosomal subunit protein uL29 (72 aa).

It belongs to the universal ribosomal protein uL29 family.

The protein is Large ribosomal subunit protein uL29 of Prochlorococcus marinus (strain MIT 9312).